Here is a 348-residue protein sequence, read N- to C-terminus: Ion-translocating oxidoreductase complex subunit D (348 aa).

5 helical membrane-spanning segments follow: residues phenylalanine 19–glycine 39, glycine 41–alanine 61, lysine 66–methionine 86, alanine 87–leucine 107, and proline 122–leucine 142. Threonine 186 is modified (FMN phosphoryl threonine). Helical transmembrane passes span isoleucine 212–leucine 232, isoleucine 236–threonine 256, leucine 265–threonine 285, serine 291–isoleucine 311, and glycine 315–isoleucine 335.

The protein belongs to the NqrB/RnfD family. The complex is composed of six subunits: RnfA, RnfB, RnfC, RnfD, RnfE and RnfG. FMN serves as cofactor.

Its subcellular location is the cell inner membrane. Part of a membrane-bound complex that couples electron transfer with translocation of ions across the membrane. The sequence is that of Ion-translocating oxidoreductase complex subunit D from Haemophilus ducreyi (strain 35000HP / ATCC 700724).